Here is an 87-residue protein sequence, read N- to C-terminus: Large ribosomal subunit protein bL31B (87 aa).

This sequence belongs to the bacterial ribosomal protein bL31 family. Type B subfamily. As to quaternary structure, part of the 50S ribosomal subunit.

This chain is Large ribosomal subunit protein bL31B, found in Burkholderia multivorans (strain ATCC 17616 / 249).